A 340-amino-acid chain; its full sequence is tRNA N6-adenosine threonylcarbamoyltransferase (340 aa).

Residues histidine 111 and histidine 115 each contribute to the Fe cation site. Residues 133 to 137 (VVSGG), aspartate 166, glycine 179, aspartate 183, and asparagine 273 each bind substrate. Residue aspartate 301 participates in Fe cation binding.

This sequence belongs to the KAE1 / TsaD family. It depends on Fe(2+) as a cofactor.

It is found in the cytoplasm. The catalysed reaction is L-threonylcarbamoyladenylate + adenosine(37) in tRNA = N(6)-L-threonylcarbamoyladenosine(37) in tRNA + AMP + H(+). Required for the formation of a threonylcarbamoyl group on adenosine at position 37 (t(6)A37) in tRNAs that read codons beginning with adenine. Is involved in the transfer of the threonylcarbamoyl moiety of threonylcarbamoyl-AMP (TC-AMP) to the N6 group of A37, together with TsaE and TsaB. TsaD likely plays a direct catalytic role in this reaction. This is tRNA N6-adenosine threonylcarbamoyltransferase from Pelobacter propionicus (strain DSM 2379 / NBRC 103807 / OttBd1).